Here is a 1054-residue protein sequence, read N- to C-terminus: Carbamoyl phosphate synthase large chain (1054 aa).

A carboxyphosphate synthetic domain region spans residues 1–402; sequence MPRRDDIRSI…SLLKAMASLE (402 aa). Positions 129, 169, 175, 176, 208, 210, 215, 241, 242, 243, 285, and 299 each coordinate ATP. An ATP-grasp 1 domain is found at 133–328; the sequence is REAMERIGLR…IAKIAARLAV (196 aa). Mg(2+) contacts are provided by glutamine 285, glutamate 299, and asparagine 301. Residues glutamine 285, glutamate 299, and asparagine 301 each coordinate Mn(2+). An oligomerization domain region spans residues 403 to 531; the sequence is IETRDIQARL…YYYSTYEQED (129 aa). A carbamoyl phosphate synthetic domain region spans residues 532-914; the sequence is EVERGENPSV…AFAKALAAAG (383 aa). The region spanning 658–849 is the ATP-grasp 2 domain; the sequence is GRLLRELGIP…LARLATRVLL (192 aa). The ATP site is built by arginine 694, lysine 733, glutamate 740, glycine 765, valine 766, histidine 767, serine 768, glutamine 808, and glutamate 820. Residues glutamine 808, glutamate 820, and asparagine 822 each coordinate Mg(2+). Glutamine 808, glutamate 820, and asparagine 822 together coordinate Mn(2+). Residues 915–1054 enclose the MGS-like domain; the sequence is QRLPESGRVY…SLQDLYAART (140 aa). Positions 915-1054 are allosteric domain; the sequence is QRLPESGRVY…SLQDLYAART (140 aa).

The protein belongs to the CarB family. In terms of assembly, composed of two chains; the small (or glutamine) chain promotes the hydrolysis of glutamine to ammonia, which is used by the large (or ammonia) chain to synthesize carbamoyl phosphate. Tetramer of heterodimers (alpha,beta)4. Requires Mg(2+) as cofactor. Mn(2+) is required as a cofactor.

It carries out the reaction hydrogencarbonate + L-glutamine + 2 ATP + H2O = carbamoyl phosphate + L-glutamate + 2 ADP + phosphate + 2 H(+). The catalysed reaction is hydrogencarbonate + NH4(+) + 2 ATP = carbamoyl phosphate + 2 ADP + phosphate + 2 H(+). It participates in amino-acid biosynthesis; L-arginine biosynthesis; carbamoyl phosphate from bicarbonate: step 1/1. It functions in the pathway pyrimidine metabolism; UMP biosynthesis via de novo pathway; (S)-dihydroorotate from bicarbonate: step 1/3. Large subunit of the glutamine-dependent carbamoyl phosphate synthetase (CPSase). CPSase catalyzes the formation of carbamoyl phosphate from the ammonia moiety of glutamine, carbonate, and phosphate donated by ATP, constituting the first step of 2 biosynthetic pathways, one leading to arginine and/or urea and the other to pyrimidine nucleotides. The large subunit (synthetase) binds the substrates ammonia (free or transferred from glutamine from the small subunit), hydrogencarbonate and ATP and carries out an ATP-coupled ligase reaction, activating hydrogencarbonate by forming carboxy phosphate which reacts with ammonia to form carbamoyl phosphate. This Rubrobacter xylanophilus (strain DSM 9941 / JCM 11954 / NBRC 16129 / PRD-1) protein is Carbamoyl phosphate synthase large chain.